We begin with the raw amino-acid sequence, 343 residues long: MKNQWKTSDFDYNLPVELIAQRPLADRSGSRLLYIDRSRRTVSHRQFNGFVEQVKPNDLVVLNDTKVIPAGLFGHKQTGGKVECLVERILSKDRFLAHIRASKAPKLGSQIIIADNFKIIIEGRYNDLFECVLHSSASILDLLYQHGRIPLPPYIQREPDKDDQARYQTIFAERAGAVAAPTAGLHFNEETFDALRKKGAAITYVTLHVGAGTFQPVRADSLADHRMHHEWMEVSKAVCDAIAKCRKNNGRVIAVGTTVMRCLETATKNGECRPYAGETDLFIYPGFQFKCVDALLTNFHLPKSTLLMLVCAFGGYELVMEAYQKAVENRYRFFSYGDAMLIS.

This sequence belongs to the QueA family. In terms of assembly, monomer.

It localises to the cytoplasm. The enzyme catalyses 7-aminomethyl-7-carbaguanosine(34) in tRNA + S-adenosyl-L-methionine = epoxyqueuosine(34) in tRNA + adenine + L-methionine + 2 H(+). It functions in the pathway tRNA modification; tRNA-queuosine biosynthesis. Its function is as follows. Transfers and isomerizes the ribose moiety from AdoMet to the 7-aminomethyl group of 7-deazaguanine (preQ1-tRNA) to give epoxyqueuosine (oQ-tRNA). This chain is S-adenosylmethionine:tRNA ribosyltransferase-isomerase, found in Coxiella burnetii (strain CbuG_Q212) (Coxiella burnetii (strain Q212)).